A 583-amino-acid chain; its full sequence is Thiol:disulfide interchange protein DsbD (583 aa).

Positions 1 to 18 are cleaved as a signal peptide; the sequence is MRRLFLLLFMLFTTLAHA. Cystine bridges form between C118–C124 and C186–C306. The next 8 membrane-spanning stretches (helical) occupy residues 168 to 188, 214 to 234, 245 to 265, 289 to 309, 326 to 346, 359 to 379, 382 to 402, and 413 to 433; these read GLGL…PCSL, SYVL…ALLG, WVLG…FGFF, LIGC…CMTA, FGGL…LLLV, WMNL…IYML, VLNP…VAYC, and LLHL…MLLV. The Thioredoxin domain maps to 458–581; that stretch reads VTAHDAFTTV…FLQRWTQTRE (124 aa). A disulfide bridge connects residues C496 and C499.

It belongs to the thioredoxin family. DsbD subfamily.

The protein resides in the cell inner membrane. It catalyses the reaction [protein]-dithiol + NAD(+) = [protein]-disulfide + NADH + H(+). The catalysed reaction is [protein]-dithiol + NADP(+) = [protein]-disulfide + NADPH + H(+). Its function is as follows. Required to facilitate the formation of correct disulfide bonds in some periplasmic proteins and for the assembly of the periplasmic c-type cytochromes. Acts by transferring electrons from cytoplasmic thioredoxin to the periplasm. This transfer involves a cascade of disulfide bond formation and reduction steps. This chain is Thiol:disulfide interchange protein DsbD, found in Pseudomonas fluorescens (strain ATCC BAA-477 / NRRL B-23932 / Pf-5).